Reading from the N-terminus, the 72-residue chain is Protein kish-A (72 aa).

A signal peptide spans 1–26 (MSAIFNFQSLLTVILLLICTCAYIRS). Residues 27–53 (LAPSLLDRNKTGLLGIFWKCARIGERK) are Extracellular-facing. Asn-35 is a glycosylation site (N-linked (GlcNAc...) asparagine). Residues 54–71 (SPYVAVCCIVMAFSILFI) traverse the membrane as a helical segment. A topological domain (cytoplasmic) is located at residue Gln-72.

Belongs to the KISH family.

The protein resides in the golgi apparatus membrane. In terms of biological role, involved in the early part of the secretory pathway. This Bos taurus (Bovine) protein is Protein kish-A (TMEM167A).